Reading from the N-terminus, the 500-residue chain is Serine/threonine-protein phosphatase 2A 56 kDa regulatory subunit beta isoform (500 aa).

Residues 1–19 (METKLPPASTPTSPSSPGL) show a composition bias toward low complexity. Disordered regions lie at residues 1–55 (METK…YQSN) and 474–500 (GTQGTQGAREAPLQRFVPQVAATGGQS). A phosphoserine; by CLK2 mark is found at serine 32, serine 35, serine 44, serine 46, serine 47, and serine 48. Residues 34-45 (RSLRRARPRRSH) show a composition bias toward basic residues.

Belongs to the phosphatase 2A regulatory subunit B56 family. In terms of assembly, component of the serine/threonine-protein phosphatase 2A complex (PP2A). This complex consists of a common heterodimeric core enzyme, composed of a 36 kDa catalytic subunit (subunit C) and a 65 kDa constant scaffold subunit (PR65 or subunit A), that associates with a variety of regulatory subunits. Proteins that associate with the core dimer include three families of regulatory subunits B (the R2/B/PR55/B55, R3/B''/PR72/PR130/PR59 and R5/B'/B56 families), the 48 kDa variable regulatory subunit, viral proteins, and cell signaling molecules. Interacts with SGO1. Interacts with AKT1. Highly expressed in brain.

Its subcellular location is the nucleus. Functionally, as the regulatory component of the serine/threonine-protein phosphatase 2A (PP2A) holoenzyme, modulates substrate specificity, subcellular localization, and responsiveness to phosphorylation. The phosphorylated form mediates the interaction between PP2A and AKT1, leading to AKT1 dephosphorylation. This chain is Serine/threonine-protein phosphatase 2A 56 kDa regulatory subunit beta isoform (PPP2R5B), found in Oryctolagus cuniculus (Rabbit).